Here is a 378-residue protein sequence, read N- to C-terminus: Protein KlaB (378 aa).

This sequence belongs to the TelA family.

Its function is as follows. Belongs to the kla operon, which is associated with cryptic tellurite resistance, and IncW plasmid fertility inhibition. This chain is Protein KlaB (klaB), found in Escherichia coli.